Reading from the N-terminus, the 228-residue chain is Large ribosomal subunit protein uL1 (228 aa).

Belongs to the universal ribosomal protein uL1 family. In terms of assembly, part of the 50S ribosomal subunit.

Binds directly to 23S rRNA. The L1 stalk is quite mobile in the ribosome, and is involved in E site tRNA release. Its function is as follows. Protein L1 is also a translational repressor protein, it controls the translation of the L11 operon by binding to its mRNA. The sequence is that of Large ribosomal subunit protein uL1 from Clavibacter michiganensis subsp. michiganensis (strain NCPPB 382).